The following is a 426-amino-acid chain: MSNVVVMGAQWGDEGKGKIVDLLTRESDVIVRFQGGNNAGHTVLVGEKQYILHLIPSGILHEGKKCLIGNGVVLDPEVFCREIDSLRAQGVDMSPARLMISRKTHLIMPYHKVLDQAREAHKCKDAKIGTTGRGIGPCYEDKSARIGVRAADLAMPELLRSKIEAALVEKNALFTGLYGQQPLDADAVFEEVMAHGAKLVPYLADVSSEIHDAWAEGRSVLFEGAQGTHLDIDHGTYPFVTSSNTVSGNAAAGSGVPPTKLDRIIAIVKAYTTRVGAGPFPTELDDATGEYLQQKGHEFGATTGRKRRCGWLDAVVLRESVRLNGPTDIALTKLDVLSGLKEISICTAYIYRGEQVAYPPQEQNGMAHVTPVYETIPGWDDDITGCTTWESLPAPVKAYVLRIEEITGVRISLVSVGPERDQTIRR.

Residues 12-18 (GDEGKGK) and 40-42 (GHT) each bind GTP. The active-site Proton acceptor is the Asp-13. The Mg(2+) site is built by Asp-13 and Gly-40. IMP is bound by residues 13–16 (DEGK), 38–41 (NAGH), Thr-131, Arg-145, Gln-226, Thr-241, and Arg-305. His-41 (proton donor) is an active-site residue. 301-307 (ATTGRKR) is a substrate binding site. GTP is bound by residues Arg-307, 333-335 (KLD), and 415-417 (SVG).

This sequence belongs to the adenylosuccinate synthetase family. As to quaternary structure, homodimer. Requires Mg(2+) as cofactor.

The protein localises to the cytoplasm. The catalysed reaction is IMP + L-aspartate + GTP = N(6)-(1,2-dicarboxyethyl)-AMP + GDP + phosphate + 2 H(+). Its pathway is purine metabolism; AMP biosynthesis via de novo pathway; AMP from IMP: step 1/2. Plays an important role in the de novo pathway of purine nucleotide biosynthesis. Catalyzes the first committed step in the biosynthesis of AMP from IMP. This Nitratidesulfovibrio vulgaris (strain ATCC 29579 / DSM 644 / CCUG 34227 / NCIMB 8303 / VKM B-1760 / Hildenborough) (Desulfovibrio vulgaris) protein is Adenylosuccinate synthetase.